The sequence spans 250 residues: 3-deoxy-manno-octulosonate cytidylyltransferase 1 (250 aa).

It belongs to the KdsB family.

It localises to the cytoplasm. It catalyses the reaction 3-deoxy-alpha-D-manno-oct-2-ulosonate + CTP = CMP-3-deoxy-beta-D-manno-octulosonate + diphosphate. It functions in the pathway nucleotide-sugar biosynthesis; CMP-3-deoxy-D-manno-octulosonate biosynthesis; CMP-3-deoxy-D-manno-octulosonate from 3-deoxy-D-manno-octulosonate and CTP: step 1/1. It participates in bacterial outer membrane biogenesis; lipopolysaccharide biosynthesis. In terms of biological role, activates KDO (a required 8-carbon sugar) for incorporation into bacterial lipopolysaccharide in Gram-negative bacteria. In Actinobacillus pleuropneumoniae serotype 5b (strain L20), this protein is 3-deoxy-manno-octulosonate cytidylyltransferase 1.